A 271-amino-acid polypeptide reads, in one-letter code: HTH-type transcriptional repressor AllR (271 aa).

The 63-residue stretch at 21 to 83 (AQALERGIAI…SQLGWWHIGL (63 aa)) folds into the HTH iclR-type domain. The H-T-H motif DNA-binding region spans 43 to 62 (VSDISLNLDLPLSTTFRLLK). Residues 98–267 (VLSVAGPFMR…ARDISTALGL (170 aa)) enclose the IclR-ED domain. Residues 154 to 156 (SGA), aspartate 207, cysteine 217, and 234 to 236 (SIS) contribute to the glyoxylate site.

In terms of biological role, negative regulator of allantoin and glyoxylate utilization operons. Binds to the gcl promoter and to the allS-allA intergenic region. In Escherichia coli O6:H1 (strain CFT073 / ATCC 700928 / UPEC), this protein is HTH-type transcriptional repressor AllR (allR).